A 145-amino-acid polypeptide reads, in one-letter code: UPF0299 membrane protein plu1549 (145 aa).

4 helical membrane-spanning segments follow: residues valine 6–threonine 26, leucine 34–phenylalanine 54, glycine 65–methionine 85, and isoleucine 95–tyrosine 115.

The protein belongs to the UPF0299 family.

The protein localises to the cell inner membrane. In Photorhabdus laumondii subsp. laumondii (strain DSM 15139 / CIP 105565 / TT01) (Photorhabdus luminescens subsp. laumondii), this protein is UPF0299 membrane protein plu1549.